We begin with the raw amino-acid sequence, 338 residues long: Holliday junction branch migration complex subunit RuvB (338 aa).

The large ATPase domain (RuvB-L) stretch occupies residues 1–180; sequence MERLLDNKFS…FGIIERLDYY (180 aa). ATP is bound by residues leucine 19, arginine 20, glycine 61, lysine 64, threonine 65, threonine 66, arginine 170, tyrosine 180, and arginine 217. Threonine 65 contacts Mg(2+). Residues 181–251 are small ATPAse domain (RuvB-S); it reads TVEELSQIVM…VAKSGLEMFE (71 aa). The interval 254-338 is head domain (RuvB-H); the sequence is EYGLDLVDRN…FNVKESGDKR (85 aa). Positions 309 and 314 each coordinate DNA.

It belongs to the RuvB family. Homohexamer. Forms an RuvA(8)-RuvB(12)-Holliday junction (HJ) complex. HJ DNA is sandwiched between 2 RuvA tetramers; dsDNA enters through RuvA and exits via RuvB. An RuvB hexamer assembles on each DNA strand where it exits the tetramer. Each RuvB hexamer is contacted by two RuvA subunits (via domain III) on 2 adjacent RuvB subunits; this complex drives branch migration. In the full resolvosome a probable DNA-RuvA(4)-RuvB(12)-RuvC(2) complex forms which resolves the HJ.

The protein resides in the cytoplasm. It carries out the reaction ATP + H2O = ADP + phosphate + H(+). Its function is as follows. The RuvA-RuvB-RuvC complex processes Holliday junction (HJ) DNA during genetic recombination and DNA repair, while the RuvA-RuvB complex plays an important role in the rescue of blocked DNA replication forks via replication fork reversal (RFR). RuvA specifically binds to HJ cruciform DNA, conferring on it an open structure. The RuvB hexamer acts as an ATP-dependent pump, pulling dsDNA into and through the RuvAB complex. RuvB forms 2 homohexamers on either side of HJ DNA bound by 1 or 2 RuvA tetramers; 4 subunits per hexamer contact DNA at a time. Coordinated motions by a converter formed by DNA-disengaged RuvB subunits stimulates ATP hydrolysis and nucleotide exchange. Immobilization of the converter enables RuvB to convert the ATP-contained energy into a lever motion, pulling 2 nucleotides of DNA out of the RuvA tetramer per ATP hydrolyzed, thus driving DNA branch migration. The RuvB motors rotate together with the DNA substrate, which together with the progressing nucleotide cycle form the mechanistic basis for DNA recombination by continuous HJ branch migration. Branch migration allows RuvC to scan DNA until it finds its consensus sequence, where it cleaves and resolves cruciform DNA. This chain is Holliday junction branch migration complex subunit RuvB, found in Caldicellulosiruptor saccharolyticus (strain ATCC 43494 / DSM 8903 / Tp8T 6331).